Here is a 61-residue protein sequence, read N- to C-terminus: Small ribosomal subunit protein eS30A (61 aa).

Residues 1-36 form a disordered region; the sequence is MGKVHGSLARAGKVKSQTPKVEKQEKPKQPKGRAYK.

The protein belongs to the eukaryotic ribosomal protein eS30 family. In terms of assembly, component of the small ribosomal subunit (SSU). Mature yeast ribosomes consist of a small (40S) and a large (60S) subunit. The 40S small subunit contains 1 molecule of ribosomal RNA (18S rRNA) and at least 33 different proteins. The large 60S subunit contains 3 rRNA molecules (25S, 5.8S and 5S rRNA) and at least 46 different proteins.

It localises to the cytoplasm. Its subcellular location is the nucleus. Functionally, component of the ribosome, a large ribonucleoprotein complex responsible for the synthesis of proteins in the cell. The small ribosomal subunit (SSU) binds messenger RNAs (mRNAs) and translates the encoded message by selecting cognate aminoacyl-transfer RNA (tRNA) molecules. The large subunit (LSU) contains the ribosomal catalytic site termed the peptidyl transferase center (PTC), which catalyzes the formation of peptide bonds, thereby polymerizing the amino acids delivered by tRNAs into a polypeptide chain. The nascent polypeptides leave the ribosome through a tunnel in the LSU and interact with protein factors that function in enzymatic processing, targeting, and the membrane insertion of nascent chains at the exit of the ribosomal tunnel. The chain is Small ribosomal subunit protein eS30A (rps3001) from Schizosaccharomyces pombe (strain 972 / ATCC 24843) (Fission yeast).